Here is a 219-residue protein sequence, read N- to C-terminus: ATP phosphoribosyltransferase (219 aa).

It belongs to the ATP phosphoribosyltransferase family. Short subfamily. As to quaternary structure, heteromultimer composed of HisG and HisZ subunits.

It is found in the cytoplasm. It catalyses the reaction 1-(5-phospho-beta-D-ribosyl)-ATP + diphosphate = 5-phospho-alpha-D-ribose 1-diphosphate + ATP. It participates in amino-acid biosynthesis; L-histidine biosynthesis; L-histidine from 5-phospho-alpha-D-ribose 1-diphosphate: step 1/9. Functionally, catalyzes the condensation of ATP and 5-phosphoribose 1-diphosphate to form N'-(5'-phosphoribosyl)-ATP (PR-ATP). Has a crucial role in the pathway because the rate of histidine biosynthesis seems to be controlled primarily by regulation of HisG enzymatic activity. This Paramagnetospirillum magneticum (strain ATCC 700264 / AMB-1) (Magnetospirillum magneticum) protein is ATP phosphoribosyltransferase.